Consider the following 195-residue polypeptide: HTH-type transcriptional regulator BetI (195 aa).

Positions 8-68 (SIRRRQLIDA…ATMRDITSQL (61 aa)) constitute an HTH tetR-type domain. Positions 31–50 (TIAQIARRAGVSTGIISHYF) form a DNA-binding region, H-T-H motif.

Its pathway is amine and polyamine biosynthesis; betaine biosynthesis via choline pathway [regulation]. Its function is as follows. Repressor involved in the biosynthesis of the osmoprotectant glycine betaine. It represses transcription of the choline transporter BetT and the genes of BetAB involved in the synthesis of glycine betaine. This is HTH-type transcriptional regulator BetI from Escherichia coli (strain UTI89 / UPEC).